Reading from the N-terminus, the 397-residue chain is MERFKKASSIIETLKQQGHEAYFVGGSVRDLIIDRPIGDIDIATSALPEEVMAIFPRHVPVGLEHGTVIVVENGEPYEVTTFRTESEYEDFRRPSSVQFVRSLEEDLKRRDFTMNAIAMTEEGERIDLFAGQEAIQKREIVTVGTAADRFQEDALRMMRGIRFVSTLGFSLETKTKQAIETYGHLLEHIAIERITVEFEKLLTGTYCVKGLKELVETKLFSHLPYLQMSEERLLKATQYNWDSFETDIEAWAFFLYCIGEEHPSVFLRQWKFSNKKIKDIVAVLLTIRKRKEKDWDTVLLYKTGIHIAEMAERVYEAMIESYDHTSVERVQTLFQALPIKSRQEMDVTGNDLLNWASKKPGPWVAEMIQKIEEAIVQGNVVNEKECIREWLQECNLL.

2 residues coordinate ATP: Gly-26 and Arg-29. 2 residues coordinate CTP: Gly-26 and Arg-29. 2 residues coordinate Mg(2+): Asp-39 and Asp-41. ATP is bound by residues Arg-110, Asp-153, Arg-156, Arg-159, and Arg-162. 5 residues coordinate CTP: Arg-110, Asp-153, Arg-156, Arg-159, and Arg-162.

Belongs to the tRNA nucleotidyltransferase/poly(A) polymerase family. Bacterial CCA-adding enzyme type 3 subfamily. In terms of assembly, homodimer. It depends on Mg(2+) as a cofactor.

It catalyses the reaction a tRNA precursor + 2 CTP + ATP = a tRNA with a 3' CCA end + 3 diphosphate. It carries out the reaction a tRNA with a 3' CCA end + 2 CTP + ATP = a tRNA with a 3' CCACCA end + 3 diphosphate. In terms of biological role, catalyzes the addition and repair of the essential 3'-terminal CCA sequence in tRNAs without using a nucleic acid template. Adds these three nucleotides in the order of C, C, and A to the tRNA nucleotide-73, using CTP and ATP as substrates and producing inorganic pyrophosphate. tRNA 3'-terminal CCA addition is required both for tRNA processing and repair. Also involved in tRNA surveillance by mediating tandem CCA addition to generate a CCACCA at the 3' terminus of unstable tRNAs. While stable tRNAs receive only 3'-terminal CCA, unstable tRNAs are marked with CCACCA and rapidly degraded. The chain is CCA-adding enzyme from Bacillus cereus (strain ZK / E33L).